The sequence spans 770 residues: Signal transducer and activator of transcription 3 (770 aa).

Alanine 2 is subject to N-acetylalanine. 2 positions are modified to N6-acetyllysine: lysine 49 and lysine 87. An Essential for nuclear import motif is present at residues aspartate 150–methionine 162. Residues tryptophan 580–leucine 670 enclose the SH2 domain. 3 positions are modified to allysine; alternate: lysine 601, lysine 615, and lysine 631. N6-acetyllysine; alternate is present on residues lysine 601, lysine 615, and lysine 631. Tyrosine 640 bears the Phosphotyrosine; by TYK2 mark. An Allysine; alternate modification is found at lysine 685. Lysine 685 is subject to N6-acetyllysine; alternate. The residue at position 704 (proline 704) is a Phosphotyrosine. Residue tyrosine 705 is modified to Phosphotyrosine; by FER and PTK6. Position 707 is an N6-acetyllysine (lysine 707). Residue threonine 714 is modified to Phosphothreonine. Position 727 is a phosphoserine; by DYRK2, NLK, NEK6, IRAK1, RPS6KA5, ZIPK/DAPK3 and PKC/PRKCE (serine 727).

The protein belongs to the transcription factor STAT family. In terms of assembly, forms a homodimer or a heterodimer with a related family member (at least STAT1). Component of a promoter-binding complex composed of STAT3, NFATC3 and NFATC4; complex formation is enhanced by calcineurin. Interacts with IL31RA, NCOA1, PELP1, SIPAR, SOCS7, STATIP1 and TMF1. Interacts with IL23R in presence of IL23. Interacts (via SH2 domain) with NLK. Interacts with ARL2BP; the interaction is enhanced by LIF and JAK1 expression. Interacts with KPNA4 and KPNA5; KPNA4 may be the primary mediator of nuclear import. Interacts with CAV2; the interaction is increased on insulin-induced tyrosine phosphorylation of CAV2 and leads to STAT3 activation. Interacts with ARL2BP; interaction is enhanced with ARL2. Interacts with NEK6. Binds to CDK9 when activated and nuclear. Interacts with BMX. Interacts with ZIPK/DAPK3. Interacts with PIAS3; the interaction occurs on stimulation by IL6, CNTF or OSM and inhibits the DNA binding activity of STAT3. In prostate cancer cells, interacts with PRKCE and promotes DNA binding activity of STAT3. Interacts with STMN3, antagonizing its microtubule-destabilizing activity. Interacts with the 'Lys-129' acetylated form of BIRC5/survivin. Interacts with FER. Interacts (via SH2 domain) with EIF2AK2/PKR (via the kinase catalytic domain). Interacts with INPP5F; the interaction is independent of STAT3 Tyr-705 phosphorylation status. Interacts with FGFR4. Interacts with OCIAD1. Interacts with OCIAD2. Interacts (unphosphorylated or phosphorylated at Ser-727) with PHB1. Interacts and may form heterodimers with NHLH1. Found in a complex with SLC39A6, SLC39A10 and with the 'Ser-727' phosphorylated form of STAT3 throughout mitosis. Interacts (when phosphorylated at Tyr-705) with CD274/PD-L1; promoting nuclear translocation of CD274/PD-L1. Interacts (when acetylated) with EP300 (via bromo domain); interaction takes place following STAT3 acetylation by EP300 and promotes enhanceosome assembly. Interacts (when acetylated) with BRD2 (via bromo domain); interaction promotes STAT3 recruitment to chromatin and T-helper Th17 cell differentiation. Interacts with FAM220A/SIPAR; the interaction occurs in both the nucleus and the cytoplasm, is enhanced by IL6 and promotes STAT3 dephosphorylation. Interacts in both unphosphorylated and phosphorylated forms with FAM220A but interacts preferentially in the phosphorylated form in the nucleus. Interacts with PTPN2; the interaction is promoted by FAM220A and leads to STAT3 dephosphorylation which negatively regulates STAT3 transcriptional activator activity. (Microbial infection) Interacts with HCV core protein. As to quaternary structure, (Microbial infection) Interacts with S.typhimurium SarA. In terms of assembly, (Microbial infection) Interacts with human cytomegalovirus (HHV-5) immediate early protein IE1; this interaction leads to STAT3 nuclear accumulation and disruption of IL6-induced STAT3 phosphorylation. Tyrosine phosphorylated upon stimulation with EGF. Tyrosine phosphorylated in response to constitutively activated FGFR1, FGFR2, FGFR3 and FGFR4. Activated through tyrosine phosphorylation by BMX. Tyrosine phosphorylated in response to IL6, IL11, LIF, CNTF, KITLG/SCF, CSF1, EGF, PDGF, IFN-alpha, LEP and OSM. Activated KIT promotes phosphorylation on tyrosine residues and subsequent translocation to the nucleus. Phosphorylated on serine upon DNA damage, probably by ATM or ATR. Serine phosphorylation is important for the formation of stable DNA-binding STAT3 homodimers and maximal transcriptional activity. ARL2BP may participate in keeping the phosphorylated state of STAT3 within the nucleus. Upon LPS challenge, phosphorylated within the nucleus by IRAK1. Upon erythropoietin treatment, phosphorylated on Ser-727 by RPS6KA5. Dephosphorylation on tyrosine residues by PTPN2 negatively regulates IL6/interleukin-6 signaling. Phosphorylation at Tyr-705 by PTK6, isoform M2 of PKM (PKM2) or FER leads to an increase of its transcriptional activity. Phosphorylation at Tyr-705 is increased in the presence of calcineurin. Phosphorylation at Tyr-640 by TYK2 negatively regulates transcriptional activity. Post-translationally, acetylated on lysine residues by EP300/p300, promoting its activation. Acetylation at Lys-49 and Lys-87 by EP300/p300 promotes its activation. Acetylation at Lys-87 by EP300/p300 promotes its association with BRD2 and recruitment to chromatin. Deacetylated at Lys-49 and Lys-87 by HDAC1. Acetylation at Lys-685 by EP300/p300 promotes its homodimerization and activation. Deacetylated at Lys-685 by HDAC3. Acetylated on lysine residues by CREBBP. Deacetylation by LOXL3 leads to disrupt STAT3 dimerization and inhibit STAT3 transcription activity. Oxidation of lysine residues to allysine on STAT3 preferentially takes place on lysine residues that are acetylated. In terms of processing, some lysine residues are oxidized to allysine by LOXL3, leading to disrupt STAT3 dimerization and inhibit STAT3 transcription activity. Oxidation of lysine residues to allysine on STAT3 preferentially takes place on lysine residues that are acetylated. (Microbial infection) Phosphorylated on Tyr-705 in the presence of S.typhimurium SarA. Heart, brain, placenta, lung, liver, skeletal muscle, kidney and pancreas. Expressed in naive CD4(+) T cells as well as T-helper Th17, Th1 and Th2 cells.

The protein localises to the cytoplasm. It localises to the nucleus. Signal transducer and transcription activator that mediates cellular responses to interleukins, KITLG/SCF, LEP and other growth factors. Once activated, recruits coactivators, such as NCOA1 or MED1, to the promoter region of the target gene. May mediate cellular responses to activated FGFR1, FGFR2, FGFR3 and FGFR4. Upon activation of IL6ST/gp130 signaling by interleukin-6 (IL6), binds to the IL6-responsive elements identified in the promoters of various acute-phase protein genes. Activated by IL31 through IL31RA. Acts as a regulator of inflammatory response by regulating differentiation of naive CD4(+) T-cells into T-helper Th17 or regulatory T-cells (Treg): acetylation promotes its transcription activity and cell differentiation while deacetylation and oxidation of lysine residues by LOXL3 inhibits differentiation. Involved in cell cycle regulation by inducing the expression of key genes for the progression from G1 to S phase, such as CCND1. Mediates the effects of LEP on melanocortin production, body energy homeostasis and lactation. May play an apoptotic role by transctivating BIRC5 expression under LEP activation. Cytoplasmic STAT3 represses macroautophagy by inhibiting EIF2AK2/PKR activity. Plays a crucial role in basal beta cell functions, such as regulation of insulin secretion. Following JAK/STAT signaling activation and as part of a complex with NFATC3 and NFATC4, binds to the alpha-beta E4 promoter region of CRYAB and activates transcription in cardiomyocytes. The chain is Signal transducer and activator of transcription 3 from Homo sapiens (Human).